The chain runs to 407 residues: Carbamoyl phosphate synthase small chain (407 aa).

A CPSase region spans residues 1 to 203; that stretch reads MSQNESGTIA…EPCGEYEGKE (203 aa). The L-glutamine site is built by serine 61, glycine 255, and glycine 257. Positions 207 to 405 constitute a Glutamine amidotransferase type-1 domain; sequence TVAAVDLGIK…CELMKNNSKE (199 aa). Residue cysteine 283 is the Nucleophile of the active site. L-glutamine is bound by residues phenylalanine 284, glutamine 287, asparagine 325, glycine 327, and phenylalanine 328. Residues histidine 378 and glutamate 380 contribute to the active site.

This sequence belongs to the CarA family. In terms of assembly, composed of two chains; the small (or glutamine) chain promotes the hydrolysis of glutamine to ammonia, which is used by the large (or ammonia) chain to synthesize carbamoyl phosphate. Tetramer of heterodimers (alpha,beta)4.

It carries out the reaction hydrogencarbonate + L-glutamine + 2 ATP + H2O = carbamoyl phosphate + L-glutamate + 2 ADP + phosphate + 2 H(+). It catalyses the reaction L-glutamine + H2O = L-glutamate + NH4(+). It functions in the pathway amino-acid biosynthesis; L-arginine biosynthesis; carbamoyl phosphate from bicarbonate: step 1/1. The protein operates within pyrimidine metabolism; UMP biosynthesis via de novo pathway; (S)-dihydroorotate from bicarbonate: step 1/3. In terms of biological role, small subunit of the glutamine-dependent carbamoyl phosphate synthetase (CPSase). CPSase catalyzes the formation of carbamoyl phosphate from the ammonia moiety of glutamine, carbonate, and phosphate donated by ATP, constituting the first step of 2 biosynthetic pathways, one leading to arginine and/or urea and the other to pyrimidine nucleotides. The small subunit (glutamine amidotransferase) binds and cleaves glutamine to supply the large subunit with the substrate ammonia. In Bifidobacterium longum (strain NCC 2705), this protein is Carbamoyl phosphate synthase small chain.